We begin with the raw amino-acid sequence, 208 residues long: MAKGILGTKLGMTQIFNEAGEVVPVTVVAVEGNVVLQLKTVDTDGYEAVQLGFGDIKESRQNKPSKGHAAKANATPKRFIKEVRTSVEGYEIGQEIKADIFAAGELVDVTGTSKGKGFQGAIKRHGQSRGPMAHGSRYHRRPGSMGPVAPNRVFKGKLLPGQMGGERKTIQNLEVVKVDVERGLLLVKGAIPGARKSNVIIKSAVKGN.

The interval 117 to 149 (GFQGAIKRHGQSRGPMAHGSRYHRRPGSMGPVA) is disordered.

Belongs to the universal ribosomal protein uL3 family. In terms of assembly, part of the 50S ribosomal subunit. Forms a cluster with proteins L14 and L19.

Functionally, one of the primary rRNA binding proteins, it binds directly near the 3'-end of the 23S rRNA, where it nucleates assembly of the 50S subunit. The sequence is that of Large ribosomal subunit protein uL3 from Exiguobacterium sp. (strain ATCC BAA-1283 / AT1b).